A 358-amino-acid chain; its full sequence is 3-isopropylmalate dehydrogenase 2 (358 aa).

74 to 87 (GPKWDKLPAESRPE) serves as a coordination point for NAD(+). 4 residues coordinate substrate: Arg-94, Arg-104, Arg-132, and Asp-221. 3 residues coordinate Mg(2+): Asp-221, Asp-245, and Asp-249. Residue 279–291 (GSAPDIAGQGVAN) participates in NAD(+) binding.

The protein belongs to the isocitrate and isopropylmalate dehydrogenases family. LeuB type 1 subfamily. As to quaternary structure, homodimer. Mg(2+) serves as cofactor. Mn(2+) is required as a cofactor.

It is found in the cytoplasm. The enzyme catalyses (2R,3S)-3-isopropylmalate + NAD(+) = 4-methyl-2-oxopentanoate + CO2 + NADH. It participates in amino-acid biosynthesis; L-leucine biosynthesis; L-leucine from 3-methyl-2-oxobutanoate: step 3/4. Its function is as follows. Catalyzes the oxidation of 3-carboxy-2-hydroxy-4-methylpentanoate (3-isopropylmalate) to 3-carboxy-4-methyl-2-oxopentanoate. The product decarboxylates to 4-methyl-2 oxopentanoate. This chain is 3-isopropylmalate dehydrogenase 2, found in Dechloromonas aromatica (strain RCB).